The chain runs to 1736 residues: Centrosomal protein of 152 kDa (1736 aa).

The segment at 1–60 (MSLEFGSVALQTQNEDEEFDKEDFEREKELQQLLTDLPHDMLDDELSSPERHDSDCSMDG) is interaction with PLK4. The segment at 1-127 (MSLEFGSVAL…SGYSPPGKRE (127 aa)) is disordered. 2 stretches are compositionally biased toward basic and acidic residues: residues 61 to 82 (RAAE…DILP) and 94 to 105 (EENRSKTEDQHL). 6 coiled-coil regions span residues 228–481 (IIQL…AELG), 552–651 (HLVS…QEFD), 692–776 (LEVY…TERQ), 835–868 (AAVS…ALRK), 950–1075 (NVMS…YEED), and 1205–1315 (GHCF…KIKR). The disordered stretch occupies residues 571 to 592 (FQQSKDGDSGMETKTDTSEKTT). Positions 575 to 592 (KDGDSGMETKTDTSEKTT) are enriched in basic and acidic residues. T1277 bears the Phosphothreonine mark. Disordered stretches follow at residues 1416–1479 (GTER…ASTA), 1543–1562 (EKNS…LRSP), 1574–1614 (GSPT…SDST), and 1677–1736 (QQGK…SPLE). Residues 1462 to 1473 (RRLEESKHREMR) show a composition bias toward basic and acidic residues. Composition is skewed to polar residues over residues 1576 to 1595 (PTET…SQDS) and 1603 to 1614 (PSSSPAWPSDST). The residue at position 1714 (K1714) is an N6-acetyllysine.

Belongs to the CEP152 family. Interacts (via N-terminus) with PLK4; the interaction is mutally exclusive with a PLK4:CEP192 interaction. Interacts (via C-terminus) with CPAP (via-N-terminus). Interacts with CINP. Interacts with CDK5RAP2, WDR62, CEP63 and CEP131. CEP63, CDK5RAP2, CEP152, WDR62 are proposed to form a stepwise assembled complex at the centrosome forming a ring near parental centrioles. Interacts with DEUP1; this interaction recruits CEP152 to the deuterosome. The interactions with CEP63 and DEUP1 are mutually exclusive. Interacts with CCDC66.

It is found in the cytoplasm. It localises to the cytoskeleton. The protein localises to the microtubule organizing center. The protein resides in the centrosome. Its subcellular location is the centriole. Functionally, necessary for centrosome duplication; the function also seems to involve CEP63, CDK5RAP2 and WDR62 through a stepwise assembled complex at the centrosome that recruits CDK2 required for centriole duplication. Acts as a molecular scaffold facilitating the interaction of PLK4 and CPAP, 2 molecules involved in centriole formation. Proposed to snatch PLK4 away from PLK4:CEP92 complexes in early G1 daughter centriole and to reposition PLK4 at the outer boundary of a newly forming CEP152 ring structure. Also plays a key role in deuterosome-mediated centriole amplification in multiciliated that can generate more than 100 centrioles. Overexpression of cep152 can drive amplification of centrioles. This Mus musculus (Mouse) protein is Centrosomal protein of 152 kDa (Cep152).